The following is a 299-amino-acid chain: uncharacterized protein (299 aa).

Residues 1-44 form a disordered region; that stretch reads MSDSNLTNPIKAFFHDEFPEQYQEPPGLQKNMKPVPDCGEKSYK. Residue 55 to 79 coordinates NADP(+); it reads LVTGGDSGIGRAAAIAYAREGADVA. Ser-188 lines the substrate pocket. Residue Tyr-201 is the Proton acceptor of the active site.

It belongs to the short-chain dehydrogenases/reductases (SDR) family.

This is an uncharacterized protein from Bacillus subtilis (strain 168).